Here is a 335-residue protein sequence, read N- to C-terminus: Pro-cathepsin H (335 aa).

An N-terminal signal peptide occupies residues Met-1–Ala-22. The propeptide at Ala-23–Ser-97 is activation peptide. N-linked (GlcNAc...) asparagine glycans are attached at residues Asn-72 and Asn-101. Intrachain disulfides connect Cys-102–Cys-327, Cys-138–Cys-181, Cys-172–Cys-214, and Cys-272–Cys-322. Residues Lys-106–Pro-115 constitute a propeptide that is removed on maturation. Cys-141 is an active-site residue. Asn-230 carries N-linked (GlcNAc...) asparagine glycosylation. Active-site residues include His-281 and Asn-301.

Belongs to the peptidase C1 family. As to quaternary structure, composed of a mini chain and a large chain. The large chain may be split into heavy and light chain. All chains are held together by disulfide bonds.

Its subcellular location is the lysosome. The enzyme catalyses Hydrolysis of proteins, acting as an aminopeptidase (notably, cleaving Arg-|-Xaa bonds) as well as an endopeptidase.. In terms of biological role, important for the overall degradation of proteins in lysosomes. This chain is Pro-cathepsin H (CTSH), found in Bos taurus (Bovine).